Reading from the N-terminus, the 149-residue chain is Limonene-1,2-epoxide hydrolase (149 aa).

The Proton donor role is filled by D101. D132 (proton acceptor) is an active-site residue.

It belongs to the limonene-1,2-epoxide hydrolase family. Monomer.

The catalysed reaction is limonene 1,2-epoxide + H2O = limonene-1,2-diol. It functions in the pathway terpene metabolism; (4R)-limonene degradation; (1S,4R)-1-hydroxylimonen-2-one from (4R)-limonene: step 2/3. In terms of biological role, catalyzes the conversion of limonene-1,2-epoxide to limonene-1,2-diol. Can use both the (-) and (+) isomers of limonene-1,2-epoxide as substrates and also has some activity with 1-methylcyclohexene oxide, cyclohexene oxide and indene oxide as substrates. This Rhodococcus erythropolis (Arthrobacter picolinophilus) protein is Limonene-1,2-epoxide hydrolase (limA).